Consider the following 103-residue polypeptide: Small ribosomal subunit protein uS10 (103 aa).

This sequence belongs to the universal ribosomal protein uS10 family. As to quaternary structure, part of the 30S ribosomal subunit.

In terms of biological role, involved in the binding of tRNA to the ribosomes. The chain is Small ribosomal subunit protein uS10 from Chlorobium phaeobacteroides (strain DSM 266 / SMG 266 / 2430).